The following is a 433-amino-acid chain: D-amino acid dehydrogenase (433 aa).

3–17 (VLVLGSGVIGTASAY) is a binding site for FAD.

Belongs to the DadA oxidoreductase family. It depends on FAD as a cofactor.

It catalyses the reaction a D-alpha-amino acid + A + H2O = a 2-oxocarboxylate + AH2 + NH4(+). It functions in the pathway amino-acid degradation; D-alanine degradation; NH(3) and pyruvate from D-alanine: step 1/1. Oxidative deamination of D-amino acids. The sequence is that of D-amino acid dehydrogenase from Pseudomonas putida (strain W619).